A 158-amino-acid polypeptide reads, in one-letter code: Transcription elongation factor GreA (158 aa).

This sequence belongs to the GreA/GreB family.

Functionally, necessary for efficient RNA polymerase transcription elongation past template-encoded arresting sites. The arresting sites in DNA have the property of trapping a certain fraction of elongating RNA polymerases that pass through, resulting in locked ternary complexes. Cleavage of the nascent transcript by cleavage factors such as GreA or GreB allows the resumption of elongation from the new 3'terminus. GreA releases sequences of 2 to 3 nucleotides. This Acinetobacter baumannii (strain SDF) protein is Transcription elongation factor GreA.